We begin with the raw amino-acid sequence, 249 residues long: DNA repair protein RecO (249 aa).

It belongs to the RecO family.

Its function is as follows. Involved in DNA repair and RecF pathway recombination. This Lactobacillus delbrueckii subsp. bulgaricus (strain ATCC BAA-365 / Lb-18) protein is DNA repair protein RecO.